The sequence spans 274 residues: Large ribosomal subunit protein bL28m (274 aa).

A disordered region spans residues 249–274; that stretch reads SETEEFGLGQEEDLFMKEEPKPTKMA. Positions 262 to 274 are enriched in basic and acidic residues; the sequence is LFMKEEPKPTKMA.

This sequence belongs to the bacterial ribosomal protein bL28 family. As to quaternary structure, component of the mitochondrial large ribosomal subunit (mt-LSU). Mature N.crassa 74S mitochondrial ribosomes consist of a small (37S) and a large (54S) subunit. The 37S small subunit contains a 16S ribosomal RNA (16S mt-rRNA) and 32 different proteins. The 54S large subunit contains a 23S rRNA (23S mt-rRNA) and 42 different proteins.

The protein resides in the mitochondrion. Functionally, component of the mitochondrial ribosome (mitoribosome), a dedicated translation machinery responsible for the synthesis of mitochondrial genome-encoded proteins, including at least some of the essential transmembrane subunits of the mitochondrial respiratory chain. The mitoribosomes are attached to the mitochondrial inner membrane and translation products are cotranslationally integrated into the membrane. In Neurospora crassa (strain ATCC 24698 / 74-OR23-1A / CBS 708.71 / DSM 1257 / FGSC 987), this protein is Large ribosomal subunit protein bL28m (mrpl24).